Here is a 522-residue protein sequence, read N- to C-terminus: Putative thymidine phosphorylase (522 aa).

This sequence belongs to the thymidine/pyrimidine-nucleoside phosphorylase family. Type 2 subfamily.

It carries out the reaction thymidine + phosphate = 2-deoxy-alpha-D-ribose 1-phosphate + thymine. This chain is Putative thymidine phosphorylase, found in Albidiferax ferrireducens (strain ATCC BAA-621 / DSM 15236 / T118) (Rhodoferax ferrireducens).